Reading from the N-terminus, the 148-residue chain is Large-conductance mechanosensitive channel (148 aa).

The next 2 helical transmembrane spans lie at valine 16–isoleucine 36 and glycine 89–valine 109.

This sequence belongs to the MscL family. As to quaternary structure, homopentamer.

The protein resides in the cell inner membrane. Its function is as follows. Channel that opens in response to stretch forces in the membrane lipid bilayer. May participate in the regulation of osmotic pressure changes within the cell. The chain is Large-conductance mechanosensitive channel from Paraburkholderia xenovorans (strain LB400).